A 247-amino-acid polypeptide reads, in one-letter code: Acetoacetate decarboxylase (247 aa).

Lys116 serves as the catalytic Schiff-base intermediate with acetoacetate.

Belongs to the ADC family.

The enzyme catalyses acetoacetate + H(+) = acetone + CO2. Its function is as follows. Catalyzes the conversion of acetoacetate to acetone and carbon dioxide. The polypeptide is Acetoacetate decarboxylase (Ralstonia nicotianae (strain ATCC BAA-1114 / GMI1000) (Ralstonia solanacearum)).